A 91-amino-acid chain; its full sequence is Progonadoliberin-1 (91 aa).

An N-terminal signal peptide occupies residues 1 to 23; that stretch reads MEPIPKLLAGLLLLTLCVVGCSS. Gln-24 carries the pyrrolidone carboxylic acid modification. Gly-33 is modified (glycine amide).

The protein belongs to the GnRH family. In terms of processing, the precursor is cleaved by ACE, which removes the Gly-Lys-Arg peptide at the C-terminus, leading to mature hormone. The mature form of Gonadoliberin-1 is also cleaved and degraded by ACE.

Its subcellular location is the secreted. Stimulates the secretion of gonadotropins; it stimulates the secretion of both luteinizing and follicle-stimulating hormones. This is Progonadoliberin-1 (GNRH1) from Sus scrofa (Pig).